The sequence spans 974 residues: Localization factor PodJL (974 aa).

Coiled-coil stretches lie at residues 81-163 (DEVG…EAAG), 218-320 (VARL…SAQA), and 375-469 (QAQA…LEAA). Disordered regions lie at residues 460–497 (SEAQ…SPFE) and 589–611 (AAAR…KKEK). The segment covering 589 to 598 (AAARAAAASE) has biased composition (low complexity). The helical transmembrane segment at 642 to 662 (ALVVFAAAGALGAGVGGLLLL) threads the bilayer. 3 Sel1-like repeats span residues 757 to 793 (PAAQ…NGGD), 794 to 829 (PRAM…DMGL), and 830 to 865 (VDSQ…RAGD).

In terms of processing, two isoforms exist, the full-length translation product PodJL and a C-terminal truncated form PodJS. Both appear during a specific time period of the cell cycle to control different aspects of polar organelle development.

It is found in the membrane. Its function is as follows. PodJL provides the positional information for the localization of several polar organelles (pili, adhesive holdfast and chemotactic apparatus) by recruiting structural (CpaE) and regulatory (PleC) proteins to a specific cell pole. The chain is Localization factor PodJL (podJ) from Caulobacter vibrioides (strain ATCC 19089 / CIP 103742 / CB 15) (Caulobacter crescentus).